The chain runs to 619 residues: CREB-regulated transcription coactivator 3 (619 aa).

Residues Met-1–Phe-103 are required for interaction with HTLV-1 TAX. Ser-4 and Ser-62 each carry phosphoserine. A disordered region spans residues Phe-103 to Gly-150. Thr-160 carries the post-translational modification Phosphothreonine. The residue at position 162 (Ser-162) is a Phosphoserine; by SIK2. Over residues Ala-165–Pro-175 the composition is skewed to polar residues. The interval Ala-165–Ser-185 is disordered. Lys-232 is covalently cross-linked (Glycyl lysine isopeptide (Lys-Gly) (interchain with G-Cter in SUMO2)). 8 positions are modified to phosphoserine: Ser-273, Ser-329, Ser-332, Ser-370, Ser-391, Ser-396, Ser-410, and Ser-443. Residues Ser-375 to Leu-431 are disordered. The tract at residues Ser-380–Ala-401 is required for interaction with PPP2CA and PPP2R1A. Positions Phe-405–Leu-431 are enriched in polar residues.

It belongs to the TORC family. In terms of assembly, binding, as a tetramer, through its N-terminal region, with the bZIP domain of CREB1 enhances recruitment of TAF4 to the promoter. 'Arg-314' in the bZIP domain of CREB1 is essential for this interaction. Interacts (when phosphorylated at Ser-162 and Se-273) with 14-3-3 proteins. Interacts with YWHAE. Interacts (when phosphorylated at Ser-391) with phosphatase PP2A catalytic subunit PPP2CA and regulatory subunits PPP2R1A and PPP2R2A. Interacts, via the N-terminal with the ankyrin repeats of BCL3, to form a complex with CREB1 on CRE and TxRE responsive elements and represses HTLV-1 LTR-mediated transcription. (Microbial infection) Interacts with HTLV-1 protein Tax; this interaction enhances tax transcriptional activity. Post-translationally, phosphorylation/dephosphorylation states of Ser-273 are required for regulating transduction of CREB activity. CRTCs/TORCs are inactive when phosphorylated, and active when dephosphorylated at this site. May be phosphorylated at Ser-391 by MAPK3/ERK1 and/or MAPK1/ERK2 or by some cyclin-dependent kinases such as CDK1,CDK2 or CDK5. Following adenylyl cyclase activation, dephosphorylated at Ser-162 and Ser-273 resulting in its dissociation from 14-3-3 proteins probably promoting CRTC3 translocation into the nucleus. As to expression, predominantly expressed in B and T lymphocytes. Highest levels in lung. Also expressed in brain, colon, heart, kidney, ovary, and prostate. Weak expression in liver, pancreas, muscle, small intestine, spleen and stomach.

The protein localises to the nucleus. Its subcellular location is the cytoplasm. Transcriptional coactivator for CREB1 which activates transcription through both consensus and variant cAMP response element (CRE) sites. Acts as a coactivator, in the SIK/TORC signaling pathway, being active when dephosphorylated and acts independently of CREB1 'Ser-133' phosphorylation. Enhances the interaction of CREB1 with TAF4. Regulates the expression of specific CREB-activated genes such as the steroidogenic gene, StAR. Potent coactivator of PPARGC1A and inducer of mitochondrial biogenesis in muscle cells. Also coactivator for TAX activation of the human T-cell leukemia virus type 1 (HTLV-1) long terminal repeats (LTR). This chain is CREB-regulated transcription coactivator 3 (CRTC3), found in Homo sapiens (Human).